Reading from the N-terminus, the 436-residue chain is GTPase Der (436 aa).

EngA-type G domains follow at residues P4–E167 and I175–N351. GTP is bound by residues G10–S17, D57–I61, N119–D122, G181–S188, D229–M233, and N294–D297. In terms of domain architecture, KH-like spans K352 to K436.

It belongs to the TRAFAC class TrmE-Era-EngA-EngB-Septin-like GTPase superfamily. EngA (Der) GTPase family. In terms of assembly, associates with the 50S ribosomal subunit.

Functionally, GTPase that plays an essential role in the late steps of ribosome biogenesis. This Streptococcus pyogenes serotype M2 (strain MGAS10270) protein is GTPase Der.